A 343-amino-acid chain; its full sequence is Mating-type protein MAT-2 (343 aa).

Disordered stretches follow at residues 98–117 (RSPQ…SEQT) and 177–223 (KKPW…AAMT). Over residues 99-117 (SPQVVSSPQSAQTSPSEQT) the composition is skewed to low complexity. A DNA-binding region (HMG box) is located at residues 131–199 (APRPMNCWII…EHLRQHPNYK (69 aa)). Over residues 206–218 (GEKKKRQSRKSKR) the composition is skewed to basic residues.

It localises to the nucleus. This is Mating-type protein MAT-2 (MAT2) from Cochliobolus heterostrophus (Southern corn leaf blight fungus).